Here is a 357-residue protein sequence, read N- to C-terminus: Phospho-N-acetylmuramoyl-pentapeptide-transferase (357 aa).

Transmembrane regions (helical) follow at residues 23-43 (AIFS…YFIY), 70-90 (TMGG…YCNL), 91-111 (SNIY…IGFI), 127-147 (LKWK…MIKI), 171-191 (YLYI…VNLT), 196-216 (GLAI…SLFS), 236-256 (LAIL…FNSY), 260-280 (VFMG…IAIL), 286-306 (LLII…LQII), and 334-354 (LIIV…LISL).

Belongs to the glycosyltransferase 4 family. MraY subfamily. Mg(2+) is required as a cofactor.

It is found in the cell inner membrane. It carries out the reaction UDP-N-acetyl-alpha-D-muramoyl-L-alanyl-gamma-D-glutamyl-meso-2,6-diaminopimeloyl-D-alanyl-D-alanine + di-trans,octa-cis-undecaprenyl phosphate = di-trans,octa-cis-undecaprenyl diphospho-N-acetyl-alpha-D-muramoyl-L-alanyl-D-glutamyl-meso-2,6-diaminopimeloyl-D-alanyl-D-alanine + UMP. It functions in the pathway cell wall biogenesis; peptidoglycan biosynthesis. Catalyzes the initial step of the lipid cycle reactions in the biosynthesis of the cell wall peptidoglycan: transfers peptidoglycan precursor phospho-MurNAc-pentapeptide from UDP-MurNAc-pentapeptide onto the lipid carrier undecaprenyl phosphate, yielding undecaprenyl-pyrophosphoryl-MurNAc-pentapeptide, known as lipid I. This Buchnera aphidicola subsp. Acyrthosiphon pisum (strain APS) (Acyrthosiphon pisum symbiotic bacterium) protein is Phospho-N-acetylmuramoyl-pentapeptide-transferase.